A 30-amino-acid chain; its full sequence is Small toxic protein BsrE (30 aa).

A helical transmembrane segment spans residues Phe-4–Ile-24.

The protein resides in the cell membrane. Toxic component of a type I toxin-antitoxin (TA) system; overexpression in the absence of cognate antisense antitoxin SR5 RNA leads to cell lysis. Base pairing occurs between the 3' UTRs of bsrE mRNA and SR5 RNA which leads to bsrE mRNA degradation initiated by RNase III (rnc) and RNase J1 (rnjA). Genetic evidence suggests an unidentified RNA-binding protein may exist that promotes TA RNA interaction. The protein is Small toxic protein BsrE of Bacillus subtilis (strain 168).